Reading from the N-terminus, the 374-residue chain is Guanine nucleotide-binding protein subunit alpha-15 (374 aa).

The G-alpha domain occupies 41–374 (EELKLLLLGP…ARYLDEINLL (334 aa)). The tract at residues 44–57 (KLLLLGPGESGKST) is G1 motif. GTP contacts are provided by residues 49-56 (GPGESGKS), 183-189 (LRSRMPT), 208-212 (DVGGQ), 277-280 (NKTD), and Ala-346. Mg(2+)-binding residues include Ser-56 and Thr-189. The tract at residues 181–189 (DVLRSRMPT) is G2 motif. The G3 motif stretch occupies residues 204-213 (LRIVDVGGQR). A G4 motif region spans residues 273–280 (ILFLNKTD). The interval 344–349 (TCATDT) is G5 motif.

This sequence belongs to the G-alpha family. G(q) subfamily. G proteins are composed of 3 units; alpha, beta and gamma. The alpha chain contains the guanine nucleotide binding site. As to expression, expressed primarily in hematopoietic cells. Coexpressed with EDG6 at the same relative levels in all tissues examined, with the highest levels in adult spleen and lung.

Guanine nucleotide-binding proteins (G proteins) are involved as modulators or transducers in various transmembrane signaling systems. In Mus musculus (Mouse), this protein is Guanine nucleotide-binding protein subunit alpha-15 (Gna15).